The primary structure comprises 601 residues: Serine/threonine-protein phosphatase 2A 65 kDa regulatory subunit A beta isoform (601 aa).

Ala2 bears the N-acetylalanine mark. HEAT repeat units follow at residues 20-58 (DSLY…GVER), 59-96 (TRTE…GGPD), 97-135 (FAHC…TPVA), 136-173 (LEAH…ASNA), 174-212 (VKAE…ELDS), 213-251 (VKTE…SQED), 252-290 (LEAL…GPKI), 291-333 (ALSD…RETV), 334-372 (IMNQ…GKEN), 373-411 (TIEH…GIRQ), 412-450 (LSQS…GVEF), 451-489 (FDEK…GTEW), 490-528 (AQNT…GKEI), 529-567 (TTKQ…DTNA), and 568-601 (LQGE…LALA).

It belongs to the phosphatase 2A regulatory subunit A family. As to quaternary structure, PP2A consists of a common heterodimeric core enzyme, composed of a 36 kDa catalytic subunit (subunit C) and a 65 kDa constant regulatory subunit (PR65 or subunit A), that associates with a variety of regulatory subunits. Proteins that associate with the core dimer include three families of regulatory subunits B (the R2/B/PR55/B55, R3/B''/PR72/PR130/PR59 and R5/B'/B56 families), the 48 kDa variable regulatory subunit, viral proteins, and cell signaling molecules. Interacts with IPO9. Interacts with SGO1. Interacts with RAF1.

Its function is as follows. The PR65 subunit of protein phosphatase 2A serves as a scaffolding molecule to coordinate the assembly of the catalytic subunit and a variable regulatory B subunit. This Mus musculus (Mouse) protein is Serine/threonine-protein phosphatase 2A 65 kDa regulatory subunit A beta isoform (Ppp2r1b).